A 359-amino-acid chain; its full sequence is Cytokine receptor-like factor 2 (359 aa).

Residues 1-19 form the signal peptide; it reads MAWALAVILLPRLLAAAAA. At 20 to 232 the chain is on the extracellular side; it reads AAAVTSRGDV…PAPSPALAPP (213 aa). Asn-53 carries N-linked (GlcNAc...) asparagine glycosylation. A disulfide bond links Cys-68 and Cys-82. Positions 119 to 213 constitute a Fibronectin type-III domain; the sequence is PPWNVTLLWT…WTAVTRLSGA (95 aa). Asn-122 carries N-linked (GlcNAc...) asparagine glycosylation. 2 disulfide bridges follow: Cys-168-Cys-169 and Cys-181-Cys-219. The WSXWS motif motif lies at 201-205; the sequence is PSEWT. The helical transmembrane segment at 233-253 threads the bilayer; the sequence is LLPLGCGLAALLTLSLLLAAL. Topologically, residues 254–359 are cytoplasmic; that stretch reads RLRRVKDALL…MVGDSGYMTL (106 aa). The Box 1 motif motif lies at 262-270; that stretch reads LLPCVPDPS. Residues 312 to 336 are disordered; the sequence is KRVEPEDGTSLCTVPRPPSFEPRGP.

This sequence belongs to the type I cytokine receptor family. Type 5 subfamily. In terms of assembly, the TSLP receptor is a heterodimer of CRLF2 and IL7R. Binding of TSLP to CRLF2/TSLPR is a mechanistic prerequisite for recruitment of IL7R to the high-affinity ternary complex. As to expression, high level of expression in liver, lung and testis. Also expressed in heart, brain, spleen, thymus and bone marrow. Highly expressed in progenitors and myeloid cells. Isoform 2 is expressed in primary hemotopoietic cells.

The protein resides in the cell membrane. Its subcellular location is the secreted. In terms of biological role, receptor for thymic stromal lymphopoietin (TSLP). Forms a functional complex with TSLP and IL7R which is capable of stimulating cell proliferation through activation of STAT3 and STAT5. Also activates JAK2. Implicated in the development of the hematopoietic system. The sequence is that of Cytokine receptor-like factor 2 (Crlf2) from Mus musculus (Mouse).